The primary structure comprises 340 residues: Ferrochelatase (340 aa).

Fe cation contacts are provided by H189 and E292.

This sequence belongs to the ferrochelatase family.

Its subcellular location is the cytoplasm. The enzyme catalyses heme b + 2 H(+) = protoporphyrin IX + Fe(2+). Its pathway is porphyrin-containing compound metabolism; protoheme biosynthesis; protoheme from protoporphyrin-IX: step 1/1. In terms of biological role, catalyzes the ferrous insertion into protoporphyrin IX. The sequence is that of Ferrochelatase from Pseudomonas syringae pv. syringae (strain B728a).